A 243-amino-acid chain; its full sequence is Carboxy-S-adenosyl-L-methionine synthase (243 aa).

Residues Y40, G65–S67, D90–N91, D118–I119, N133, and R200 contribute to the S-adenosyl-L-methionine site.

This sequence belongs to the class I-like SAM-binding methyltransferase superfamily. Cx-SAM synthase family. In terms of assembly, homodimer.

It carries out the reaction prephenate + S-adenosyl-L-methionine = carboxy-S-adenosyl-L-methionine + 3-phenylpyruvate + H2O. In terms of biological role, catalyzes the conversion of S-adenosyl-L-methionine (SAM) to carboxy-S-adenosyl-L-methionine (Cx-SAM). This chain is Carboxy-S-adenosyl-L-methionine synthase, found in Shewanella pealeana (strain ATCC 700345 / ANG-SQ1).